The primary structure comprises 667 residues: UvrABC system protein C (667 aa).

The 80-residue stretch at 43 to 122 (AEPGCYLMRD…IKNQQPHFNV (80 aa)) folds into the GIY-YIG domain. Residues 232–267 (QELKVLLEKQMERYSDRMDYESAANIRDQIKGLEQL) enclose the UVR domain.

The protein belongs to the UvrC family. As to quaternary structure, interacts with UvrB in an incision complex.

The protein localises to the cytoplasm. The UvrABC repair system catalyzes the recognition and processing of DNA lesions. UvrC both incises the 5' and 3' sides of the lesion. The N-terminal half is responsible for the 3' incision and the C-terminal half is responsible for the 5' incision. This Prochlorococcus marinus (strain MIT 9313) protein is UvrABC system protein C.